The following is a 364-amino-acid chain: Putative agmatine deiminase 1 (364 aa).

The active-site Amidino-cysteine intermediate is cysteine 356.

Belongs to the agmatine deiminase family.

It catalyses the reaction agmatine + H2O = N-carbamoylputrescine + NH4(+). The polypeptide is Putative agmatine deiminase 1 (Listeria monocytogenes serotype 4b (strain F2365)).